A 258-amino-acid chain; its full sequence is HLA class II histocompatibility antigen, DP beta 1 chain (258 aa).

The N-terminal stretch at 1-29 (MMVLQVSAAPRTVALTALLMVLLTSVVQG) is a signal peptide. The interval 30-121 (RATPENYLFQ…LGGPMTLQRR (92 aa)) is beta-1. The Extracellular segment spans residues 30 to 225 (RATPENYLFQ…KAQSDSARSK (196 aa)). Intrachain disulfides connect C44–C106 and C144–C200. N48 carries N-linked (GlcNAc...) asparagine glycosylation. The tract at residues 122 to 215 (VQPRVNVSPS…SLDSPVTVEW (94 aa)) is beta-2. The 89-residue stretch at 124–212 (PRVNVSPSKK…EHTSLDSPVT (89 aa)) folds into the Ig-like C1-type domain. Residues 216–225 (KAQSDSARSK) are connecting peptide. A helical transmembrane segment spans residues 226–246 (TLTGAGGFVLGLIICGVGIFM). Residues 247-258 (HRRSKKVQRGSA) are Cytoplasmic-facing.

The protein belongs to the MHC class II family. Heterodimer of an alpha and a beta subunit; also referred as MHC class II molecule. In the endoplasmic reticulum (ER) it forms a heterononamer; 3 MHC class II molecules bind to a CD74 homotrimer (also known as invariant chain or HLA class II histocompatibility antigen gamma chain). In the endosomal/lysosomal system; CD74 undergoes sequential degradation by various proteases; leaving a small fragment termed CLIP on each MHC class II molecule. MHC class II molecule interacts with HLA_DM, and HLA_DO in B-cells, in order to release CLIP and facilitate the binding of antigenic peptides.

Its subcellular location is the cell membrane. It is found in the endoplasmic reticulum membrane. The protein resides in the golgi apparatus. It localises to the trans-Golgi network membrane. The protein localises to the endosome membrane. Its subcellular location is the lysosome membrane. Binds peptides derived from antigens that access the endocytic route of antigen presenting cells (APC) and presents them on the cell surface for recognition by the CD4 T-cells. The peptide binding cleft accommodates peptides of 10-30 residues. The peptides presented by MHC class II molecules are generated mostly by degradation of proteins that access the endocytic route, where they are processed by lysosomal proteases and other hydrolases. Exogenous antigens that have been endocytosed by the APC are thus readily available for presentation via MHC II molecules, and for this reason this antigen presentation pathway is usually referred to as exogenous. As membrane proteins on their way to degradation in lysosomes as part of their normal turn-over are also contained in the endosomal/lysosomal compartments, exogenous antigens must compete with those derived from endogenous components. Autophagy is also a source of endogenous peptides, autophagosomes constitutively fuse with MHC class II loading compartments. In addition to APCs, other cells of the gastrointestinal tract, such as epithelial cells, express MHC class II molecules and CD74 and act as APCs, which is an unusual trait of the GI tract. To produce a MHC class II molecule that presents an antigen, three MHC class II molecules (heterodimers of an alpha and a beta chain) associate with a CD74 trimer in the ER to form a heterononamer. Soon after the entry of this complex into the endosomal/lysosomal system where antigen processing occurs, CD74 undergoes a sequential degradation by various proteases, including CTSS and CTSL, leaving a small fragment termed CLIP (class-II-associated invariant chain peptide). The removal of CLIP is facilitated by HLA-DM via direct binding to the alpha-beta-CLIP complex so that CLIP is released. HLA-DM stabilizes MHC class II molecules until primary high affinity antigenic peptides are bound. The MHC II molecule bound to a peptide is then transported to the cell membrane surface. In B-cells, the interaction between HLA-DM and MHC class II molecules is regulated by HLA-DO. Primary dendritic cells (DCs) also to express HLA-DO. Lysosomal microenvironment has been implicated in the regulation of antigen loading into MHC II molecules, increased acidification produces increased proteolysis and efficient peptide loading. In Homo sapiens (Human), this protein is HLA class II histocompatibility antigen, DP beta 1 chain (HLA-DPB1).